A 350-amino-acid chain; its full sequence is Histidinol-phosphate aminotransferase (350 aa).

N6-(pyridoxal phosphate)lysine is present on lysine 220.

The protein belongs to the class-II pyridoxal-phosphate-dependent aminotransferase family. Histidinol-phosphate aminotransferase subfamily. Homodimer. The cofactor is pyridoxal 5'-phosphate.

It carries out the reaction L-histidinol phosphate + 2-oxoglutarate = 3-(imidazol-4-yl)-2-oxopropyl phosphate + L-glutamate. It participates in amino-acid biosynthesis; L-histidine biosynthesis; L-histidine from 5-phospho-alpha-D-ribose 1-diphosphate: step 7/9. The chain is Histidinol-phosphate aminotransferase from Macrococcus caseolyticus (strain JCSC5402) (Macrococcoides caseolyticum).